Reading from the N-terminus, the 252-residue chain is Indole-3-glycerol phosphate synthase (252 aa).

It belongs to the TrpC family.

The enzyme catalyses 1-(2-carboxyphenylamino)-1-deoxy-D-ribulose 5-phosphate + H(+) = (1S,2R)-1-C-(indol-3-yl)glycerol 3-phosphate + CO2 + H2O. The protein operates within amino-acid biosynthesis; L-tryptophan biosynthesis; L-tryptophan from chorismate: step 4/5. This chain is Indole-3-glycerol phosphate synthase, found in Listeria monocytogenes serotype 4b (strain CLIP80459).